The primary structure comprises 38 residues: Cytochrome b6-f complex subunit 5 (38 aa).

A helical transmembrane segment spans residues 5–25 (LLCGIVLGLIPVTLLGLFVAA).

This sequence belongs to the PetG family. As to quaternary structure, the 4 large subunits of the cytochrome b6-f complex are cytochrome b6, subunit IV (17 kDa polypeptide, PetD), cytochrome f and the Rieske protein, while the 4 small subunits are PetG, PetL, PetM and PetN. The complex functions as a dimer.

It localises to the cellular thylakoid membrane. Its function is as follows. Component of the cytochrome b6-f complex, which mediates electron transfer between photosystem II (PSII) and photosystem I (PSI), cyclic electron flow around PSI, and state transitions. PetG is required for either the stability or assembly of the cytochrome b6-f complex. The polypeptide is Cytochrome b6-f complex subunit 5 (Parasynechococcus marenigrum (strain WH8102)).